The chain runs to 447 residues: Cysteine--tRNA ligase (447 aa).

Residue Cys-28 coordinates Zn(2+). A 'HIGH' region motif is present at residues 30-40 (PTVYNYIHIGN). Cys-211, His-236, and Glu-240 together coordinate Zn(2+). A 'KMSKS' region motif is present at residues 268–272 (KMSKS). Position 271 (Lys-271) interacts with ATP.

Belongs to the class-I aminoacyl-tRNA synthetase family. Monomer. Zn(2+) serves as cofactor.

It localises to the cytoplasm. It catalyses the reaction tRNA(Cys) + L-cysteine + ATP = L-cysteinyl-tRNA(Cys) + AMP + diphosphate. The protein is Cysteine--tRNA ligase of Streptococcus pyogenes serotype M1.